Here is a 408-residue protein sequence, read N- to C-terminus: tRNA-specific 2-thiouridylase MnmA (408 aa).

ATP is bound by residues 27 to 34 and leucine 53; that span reads AMSGGVDS. The active-site Nucleophile is the cysteine 121. A disulfide bond links cysteine 121 and cysteine 222. An ATP-binding site is contributed by glycine 145. The interval 172-174 is interaction with tRNA; sequence RDQ. Cysteine 222 acts as the Cysteine persulfide intermediate in catalysis.

It belongs to the MnmA/TRMU family.

It is found in the cytoplasm. The catalysed reaction is S-sulfanyl-L-cysteinyl-[protein] + uridine(34) in tRNA + AH2 + ATP = 2-thiouridine(34) in tRNA + L-cysteinyl-[protein] + A + AMP + diphosphate + H(+). Catalyzes the 2-thiolation of uridine at the wobble position (U34) of tRNA, leading to the formation of s(2)U34. The chain is tRNA-specific 2-thiouridylase MnmA from Rhizobium johnstonii (strain DSM 114642 / LMG 32736 / 3841) (Rhizobium leguminosarum bv. viciae).